The primary structure comprises 349 residues: Cdc42 effector protein 4 (349 aa).

Lys-5 carries the N6-methyllysine modification. Position 18 is a phosphoserine (Ser-18). One can recognise a CRIB domain in the interval 27-41 (ISAPLGDFRHTMHVG). Phosphoserine occurs at positions 64, 103, 107, and 116. The segment covering 123 to 132 (KEAAEKDSSK) has biased composition (basic and acidic residues). Disordered regions lie at residues 123–172 (KEAA…LLDE), 220–240 (QWGS…GPSS), and 278–349 (GWAV…EIRV). Residues Ser-136, Ser-138, Ser-140, Ser-154, Ser-165, Ser-223, Ser-285, and Ser-288 each carry the phosphoserine modification. Residues 280–308 (AVVAPSPSSARSVGSHTTRDSSSLSSYTS) show a composition bias toward low complexity. Basic and acidic residues predominate over residues 311–322 (LEERSPAFRGPD). Positions 338–349 (FMDEEEEDEIRV) are enriched in acidic residues.

The protein belongs to the BORG/CEP family. As to quaternary structure, interacts with CDC42 and RHOQ, in a GTP-dependent manner. Ubiquitous.

It is found in the endomembrane system. It localises to the cytoplasm. Its subcellular location is the cytoskeleton. Its function is as follows. Probably involved in the organization of the actin cytoskeleton. May act downstream of CDC42 to induce actin filament assembly leading to cell shape changes. Induces pseudopodia formation, when overexpressed in fibroblasts. The sequence is that of Cdc42 effector protein 4 (Cdc42ep4) from Mus musculus (Mouse).